We begin with the raw amino-acid sequence, 107 residues long: RecQ-mediated genome instability protein 2 homolog (107 aa).

The protein belongs to the RMI2 family. Component of the RMI complex, containing at least top-3, rmh-1 and rmh-2. Component of the BTR double Holliday Junction dissolution complex composed of at least him-6, top-3, rmh-1 and rmif-2, which is involved in double strand break repair in the germline. Interacts with rmh-1; the interaction is direct and is required for mutual stability and localization at nuclear foci. Expressed in the germline.

It localises to the nucleus. Functionally, essential component of the RMI complex, a complex that plays an important role in the processing of homologous recombination intermediates. Component of the BTR double Holliday Junction dissolution complex, which is involved in homologous recombination during meiotic double strand break in the germline. Plays a role in double strand break repair by positively regulating the accumulation of rad-51 at double strand breaks. Stabilizes and positively regulates the localization of the BTR double Holliday Junction dissolution complex components rmh-1, him-6 and top-3 at nuclear foci during meiotic recombination. Positively regulates meiotic recombination, chiasma formation, and chromosome segregation in meiosis. Positively regulates DNA crossover formation and positioning on chromosome arms (away from the chromosome center) during homologous recombination. This is RecQ-mediated genome instability protein 2 homolog from Caenorhabditis elegans.